The chain runs to 506 residues: Aminoaldehyde dehydrogenase 1b (506 aa).

Na(+) is bound at residue Asp102. Residues 162-164 (TPW) and 188-191 (KPSE) each bind NAD(+). Leu192 is a binding site for Na(+). Residues 242–245 (SFET) and Glu263 each bind NAD(+). The active-site Proton acceptor is the Glu263. The active-site Nucleophile is Cys297. 2 residues coordinate NAD(+): Glu396 and Trp462.

Belongs to the aldehyde dehydrogenase family.

The enzyme catalyses 4-aminobutanal + NAD(+) + H2O = 4-aminobutanoate + NADH + 2 H(+). It catalyses the reaction 3-aminopropanal + NAD(+) + H2O = beta-alanine + NADH + 2 H(+). It carries out the reaction 4-(trimethylamino)butanal + NAD(+) + H2O = 4-(trimethylamino)butanoate + NADH + 2 H(+). The catalysed reaction is 4-guanidinobutanal + NAD(+) + H2O = 4-guanidinobutanoate + NADH + 2 H(+). The enzyme catalyses betaine aldehyde + NAD(+) + H2O = glycine betaine + NADH + 2 H(+). It participates in amine and polyamine biosynthesis; betaine biosynthesis via choline pathway; betaine from betaine aldehyde: step 1/1. Its function is as follows. Dehydrogenase that catalyzes the oxidation of several aminoaldehydes. Metabolizes and detoxifies aldehyde products of polyamine degradation to non-toxic amino acids. Catalyzes the oxidation of 4-aminobutanal and 3-aminopropanal to 4-aminobutanoate and beta-alanine, respectively. Catalyzes the oxidation of 4-(trimethylamino)butanal and 4-guanidinobutanal to 4-trimethylammoniobutanoate and 4-guanidinobutanoate, respectively. Catalyzes the oxidation of betaine aldehyde to glycine betaine. The sequence is that of Aminoaldehyde dehydrogenase 1b from Zea mays (Maize).